Consider the following 152-residue polypeptide: Adrenodoxin-like protein 2, mitochondrial (152 aa).

The N-terminal 29 residues, 1-29 (MLVINSCRAASRLALRSLNLRSPIATRTF), are a transit peptide targeting the mitochondrion. The 2Fe-2S ferredoxin-type domain maps to 41–146 (VNITFVRANG…GLEVHVPSTI (106 aa)). 4 residues coordinate [2Fe-2S] cluster: Cys-80, Cys-86, Cys-89, and Cys-127.

The protein belongs to the adrenodoxin/putidaredoxin family. It depends on [2Fe-2S] cluster as a cofactor.

It is found in the mitochondrion. Its function is as follows. Required for ecdysteroidogenesis in the prothoracic gland which is necessary for larval to pupal transition. The sequence is that of Adrenodoxin-like protein 2, mitochondrial from Drosophila melanogaster (Fruit fly).